We begin with the raw amino-acid sequence, 239 residues long: MRPRNNNLNLKFIRIYRWTPSNQAEAKFSVHPIHTSNCGPMILDALIKIKDEQDSSLAFRRSCREGICGSCSMNIDGINTLACLKPIKTNANIITIYPLPHMYIIKDLVPDLSNFFSQYKYIKPWLINNVPKKSEYLQSEKDRSELNGIYECILCACCSASCPSYWWNHDKYLGPAILLQAYRWLADSRDTNAKERLKLLGGKSKLFKCHTIMNCSRTCPKSLNPGKAIASIKHSINYS.

One can recognise a 2Fe-2S ferredoxin-type domain in the interval 24–99 (AEAKFSVHPI…NANIITIYPL (76 aa)). Positions 63, 68, 71, and 83 each coordinate [2Fe-2S] cluster. In terms of domain architecture, 4Fe-4S ferredoxin-type spans 142 to 172 (DRSELNGIYECILCACCSASCPSYWWNHDKY). 3 residues coordinate [4Fe-4S] cluster: Cys152, Cys155, and Cys158. Position 162 (Cys162) interacts with [3Fe-4S] cluster. Position 167 (Trp167) interacts with a ubiquinone. Residues Cys209 and Cys215 each contribute to the [3Fe-4S] cluster site. Cys219 lines the [4Fe-4S] cluster pocket.

It belongs to the succinate dehydrogenase/fumarate reductase iron-sulfur protein family. As to quaternary structure, component of complex II composed of four subunits: a flavoprotein (FP), an iron-sulfur protein (IP), and a cytochrome b composed of a large and a small subunit. The cofactor is [2Fe-2S] cluster. Requires [3Fe-4S] cluster as cofactor. [4Fe-4S] cluster is required as a cofactor.

The protein resides in the mitochondrion inner membrane. It catalyses the reaction a quinone + succinate = fumarate + a quinol. Its pathway is carbohydrate metabolism; tricarboxylic acid cycle; fumarate from succinate (eukaryal route): step 1/1. Functionally, iron-sulfur protein (IP) subunit of succinate dehydrogenase (SDH) that is involved in complex II of the mitochondrial electron transport chain and is responsible for transferring electrons from succinate to ubiquinone (coenzyme Q). In Porphyra purpurea (Red seaweed), this protein is Succinate dehydrogenase [ubiquinone] iron-sulfur subunit (SDH2).